The chain runs to 515 residues: Aldehyde dehydrogenase (515 aa).

Residues 1–12 (MTVAEQQPQHQG) are compositionally biased toward polar residues. The interval 1 to 20 (MTVAEQQPQHQGYANPGTPG) is disordered. 228-234 (GFGLEAG) serves as a coordination point for NAD(+). Residues Glu272 and Cys311 contribute to the active site.

This sequence belongs to the aldehyde dehydrogenase family.

The enzyme catalyses an aldehyde + NAD(+) + H2O = a carboxylate + NADH + 2 H(+). The polypeptide is Aldehyde dehydrogenase (aldA) (Deinococcus radiodurans (strain ATCC 13939 / DSM 20539 / JCM 16871 / CCUG 27074 / LMG 4051 / NBRC 15346 / NCIMB 9279 / VKM B-1422 / R1)).